The sequence spans 309 residues: Probable ABC transporter permease protein YqgH (309 aa).

6 helical membrane-spanning segments follow: residues 30–50 (MIVTACALIMIAASVAITIFL), 88–108 (FIFGSFAVTILSALIAAPLGI), 133–153 (LVGIPSVVYGFIGLTVLVPFI), 165–185 (LLAGTIVLSVMILPTITSISA), 214–234 (LVPAAFPTLMTAVVLGMARAF), and 280–300 (NTLWSMGLVLLVMSFLFILLI). The ABC transmembrane type-1 domain maps to 89–300 (IFGSFAVTIL…VMSFLFILLI (212 aa)).

Belongs to the binding-protein-dependent transport system permease family. CysTW subfamily.

The protein resides in the cell membrane. Part of the binding-protein-dependent transport system YqgGHIJK. Probably responsible for the translocation of the substrate across the membrane. In Bacillus subtilis (strain 168), this protein is Probable ABC transporter permease protein YqgH (yqgH).